A 512-amino-acid polypeptide reads, in one-letter code: Photosystem II CP47 reaction center protein (512 aa).

6 helical membrane-spanning segments follow: residues 21–36 (AVHL…WAGS), 101–115 (IVLS…IWHW), 140–156 (GIHL…FGAF), 203–218 (IAAG…FHLS), 237–252 (VLSS…AFVV), and 457–472 (TFAL…HGAR).

This sequence belongs to the PsbB/PsbC family. PsbB subfamily. As to quaternary structure, PSII is composed of 1 copy each of membrane proteins PsbA, PsbB, PsbC, PsbD, PsbE, PsbF, PsbH, PsbI, PsbJ, PsbK, PsbL, PsbM, PsbT, PsbX, PsbY, PsbZ, Psb30/Ycf12, at least 3 peripheral proteins of the oxygen-evolving complex and a large number of cofactors. It forms dimeric complexes. It depends on Binds multiple chlorophylls. PSII binds additional chlorophylls, carotenoids and specific lipids. as a cofactor.

It localises to the plastid. Its subcellular location is the chloroplast thylakoid membrane. Its function is as follows. One of the components of the core complex of photosystem II (PSII). It binds chlorophyll and helps catalyze the primary light-induced photochemical processes of PSII. PSII is a light-driven water:plastoquinone oxidoreductase, using light energy to abstract electrons from H(2)O, generating O(2) and a proton gradient subsequently used for ATP formation. This Physcomitrium patens (Spreading-leaved earth moss) protein is Photosystem II CP47 reaction center protein.